The sequence spans 361 residues: Ornithine carbamoyltransferase, mitochondrial (361 aa).

The transit peptide at 1 to 24 directs the protein to the mitochondrion; the sequence is MIPTARCGALRQKIPVQAVRQYSS. Carbamoyl phosphate is bound by residues 89 to 92, Arg140, His167, and Gln170; that span reads STRT. 4 residues coordinate L-ornithine: Asn207, Asp273, Ser277, and Met278. Catalysis depends on Cys315, which acts as the Proton acceptor. Residues 315 to 316 and Arg342 each bind carbamoyl phosphate; that span reads CL.

The protein belongs to the aspartate/ornithine carbamoyltransferase superfamily. OTCase family. In terms of assembly, homotrimer.

It localises to the mitochondrion matrix. It catalyses the reaction carbamoyl phosphate + L-ornithine = L-citrulline + phosphate + H(+). It participates in amino-acid biosynthesis; L-arginine biosynthesis; L-arginine from L-ornithine and carbamoyl phosphate: step 1/3. This is Ornithine carbamoyltransferase, mitochondrial (arg1) from Aspergillus terreus.